A 138-amino-acid polypeptide reads, in one-letter code: MTVVPAQQGGGGARGTSGLYDVLELVLDRGLVIDAFVRVSLVGIEILKIDVRVVVASVDTYLRFAEACNRLDLEAGPRKDPGLPDLVGEMTESGARGKSKGALSGAAETISDALKGSSSGSSSGSSSRSTSRKKEEQE.

The interval Glu-74–Glu-138 is disordered. Positions Gly-116 to Ser-129 are enriched in low complexity.

Belongs to the gas vesicle GvpA family. The gas vesicle shell is 2 nm thick and consists of a single layer of this protein. It forms helical ribs nearly perpendicular to the long axis of the vesicle.

Its subcellular location is the gas vesicle shell. Gas vesicles are hollow, gas filled proteinaceous nanostructures found in some microorganisms. During planktonic growth they allow positioning of the organism at a favorable depth for light or nutrient acquisition. GvpA forms the protein shell. It is not clear what function gas vesicles perform in soil bacteria. The protein is Gas vesicle protein A of Streptomyces sp. (strain CB03234).